Consider the following 484-residue polypeptide: MDFSSITVLCIGDIMLDRFVYGEMERISPEAPVPVLRLGRTREMPGGVGNVANNILSLGGRAILVGLVGRDTPGQALRGLLGQRPGLTDALVETGARPTICKTRFIAANQQVVRADEESRLALQPDEATSLIAAIDAHIGAADIVVLSDYAKGTCADPVIAHAIATARARGIAVFVDPKSRDFARYRGASCITPNARELAQATGLPIDTDAEIEQAARAAMARADAVAILATRSEKGMALVEREGGVQIVPARAREVFDVSGAGDTVIAALALAAGSGMTLAQAMHVANAAAGVVVGKLGTATADIAEVLAELNAQDADAMGGTPSLLSRAQAAEQVARWKAQGLRVGFTNGCFDIIHPGHVALLAAARRACDRLIVALNDDASVARLKGPERPVNPLEDRARVMAAIRHVDAVVAFGEDTPLELIRLLLPDVLVKGADYRPDQVVGADVVRQAGGRVVLADLEDGKSTTRTIGRIRAAGAADR.

The interval 1–320 is ribokinase; the sequence is MDFSSITVLC…AELNAQDADA (320 aa). ATP is bound at residue 195 to 198; sequence NARE. The active site involves aspartate 265. A cytidylyltransferase region spans residues 349-484; sequence FTNGCFDIIH…RIRAAGAADR (136 aa).

This sequence in the N-terminal section; belongs to the carbohydrate kinase PfkB family. The protein in the C-terminal section; belongs to the cytidylyltransferase family. In terms of assembly, homodimer.

It catalyses the reaction D-glycero-beta-D-manno-heptose 7-phosphate + ATP = D-glycero-beta-D-manno-heptose 1,7-bisphosphate + ADP + H(+). The catalysed reaction is D-glycero-beta-D-manno-heptose 1-phosphate + ATP + H(+) = ADP-D-glycero-beta-D-manno-heptose + diphosphate. The protein operates within nucleotide-sugar biosynthesis; ADP-L-glycero-beta-D-manno-heptose biosynthesis; ADP-L-glycero-beta-D-manno-heptose from D-glycero-beta-D-manno-heptose 7-phosphate: step 1/4. It participates in nucleotide-sugar biosynthesis; ADP-L-glycero-beta-D-manno-heptose biosynthesis; ADP-L-glycero-beta-D-manno-heptose from D-glycero-beta-D-manno-heptose 7-phosphate: step 3/4. Its function is as follows. Catalyzes the phosphorylation of D-glycero-D-manno-heptose 7-phosphate at the C-1 position to selectively form D-glycero-beta-D-manno-heptose-1,7-bisphosphate. In terms of biological role, catalyzes the ADP transfer from ATP to D-glycero-beta-D-manno-heptose 1-phosphate, yielding ADP-D-glycero-beta-D-manno-heptose. This is Bifunctional protein HldE from Gluconacetobacter diazotrophicus (strain ATCC 49037 / DSM 5601 / CCUG 37298 / CIP 103539 / LMG 7603 / PAl5).